A 524-amino-acid chain; its full sequence is General transcription factor IIF subunit 1 (524 aa).

Disordered regions lie at residues 56 to 76 (MYQE…RKQR) and 181 to 462 (RLKD…IQLT). Basic residues predominate over residues 242–257 (KPQKKVPAKGGKKKKR). Positions 262-289 (EALEDSDDGDFEGQEVDYMSDESSSDEE) are enriched in acidic residues. Residues 290–307 (LPGKIKPAKEEEGPKGLD) are compositionally biased toward basic and acidic residues. 2 stretches are compositionally biased toward acidic residues: residues 308–327 (EQSE…EEGE) and 347–358 (SDESETSEDSDI). The span at 368 to 378 (QKKKTPPKKDK) shows a compositional bias: basic residues. The span at 381-397 (GSNSSSRGNSRPGTPSP) shows a compositional bias: low complexity. A compositionally biased stretch (polar residues) spans 436–459 (PQNTSGKSTPQPQSGKSTPSSGDI).

The protein belongs to the TFIIF alpha subunit family. In terms of assembly, heterodimer of an alpha and a beta subunit. Post-translationally, phosphorylated on Ser and other residues by TAF1 and casein kinase II-like kinases.

The protein localises to the nucleus. TFIIF is a general transcription initiation factor that binds to RNA polymerase II and helps to recruit it to the initiation complex in collaboration with TFIIB. It promotes transcription elongation. In Xenopus laevis (African clawed frog), this protein is General transcription factor IIF subunit 1 (gtf2f1).